The following is a 745-amino-acid chain: Exocyst complex component 3 (745 aa).

N6-acetyllysine is present on Lys28.

The protein belongs to the SEC6 family. In terms of assembly, the exocyst complex is composed of EXOC1, EXOC2, EXOC3, EXOC4, EXOC5, EXOC6, EXOC7 and EXOC8. Interacts with EXOC3L1. Interacts with BIRC6/bruce. Interacts with MYRIP. Interacts with SLC6A9. As to expression, expressed in epididymis (at protein level).

The protein resides in the cytoplasm. It localises to the perinuclear region. The protein localises to the cell projection. It is found in the growth cone. Its subcellular location is the midbody. The protein resides in the golgi apparatus. It localises to the neuron projection. In terms of biological role, component of the exocyst complex involved in the docking of exocytic vesicles with fusion sites on the plasma membrane. The sequence is that of Exocyst complex component 3 (EXOC3) from Homo sapiens (Human).